The primary structure comprises 305 residues: Glycerol-3-phosphate dehydrogenase [NAD(P)+] (305 aa).

Residues tryptophan 11, arginine 31, and lysine 79 each coordinate NADPH. Sn-glycerol 3-phosphate is bound by residues lysine 79 and glycine 107. Alanine 111 is a binding site for NADPH. Sn-glycerol 3-phosphate-binding residues include lysine 162, aspartate 215, serine 225, arginine 226, and asparagine 227. Catalysis depends on lysine 162, which acts as the Proton acceptor. Arginine 226 contacts NADPH. Glutamate 252 is an NADPH binding site.

Belongs to the NAD-dependent glycerol-3-phosphate dehydrogenase family.

Its subcellular location is the cytoplasm. It carries out the reaction sn-glycerol 3-phosphate + NAD(+) = dihydroxyacetone phosphate + NADH + H(+). It catalyses the reaction sn-glycerol 3-phosphate + NADP(+) = dihydroxyacetone phosphate + NADPH + H(+). It functions in the pathway membrane lipid metabolism; glycerophospholipid metabolism. Catalyzes the reduction of the glycolytic intermediate dihydroxyacetone phosphate (DHAP) to sn-glycerol 3-phosphate (G3P), the key precursor for phospholipid synthesis. This Gloeobacter violaceus (strain ATCC 29082 / PCC 7421) protein is Glycerol-3-phosphate dehydrogenase [NAD(P)+].